Consider the following 65-residue polypeptide: Large ribosomal subunit protein uL29 (65 aa).

The protein belongs to the universal ribosomal protein uL29 family.

This is Large ribosomal subunit protein uL29 from Thioalkalivibrio sulfidiphilus (strain HL-EbGR7).